The sequence spans 394 residues: Argininosuccinate synthase (394 aa).

ATP-binding positions include 7 to 15 and A35; that span reads AYSGGLDTS. Y85 is an L-citrulline binding site. G115 is a binding site for ATP. The L-aspartate site is built by T117, N121, and D122. Residue N121 participates in L-citrulline binding. L-citrulline-binding residues include R125, S174, S183, E258, and Y270.

It belongs to the argininosuccinate synthase family. Type 1 subfamily. Homotetramer.

The protein resides in the cytoplasm. The catalysed reaction is L-citrulline + L-aspartate + ATP = 2-(N(omega)-L-arginino)succinate + AMP + diphosphate + H(+). The protein operates within amino-acid biosynthesis; L-arginine biosynthesis; L-arginine from L-ornithine and carbamoyl phosphate: step 2/3. This is Argininosuccinate synthase from Methanopyrus kandleri (strain AV19 / DSM 6324 / JCM 9639 / NBRC 100938).